The primary structure comprises 452 residues: Methionine aminopeptidase 2-1 (452 aa).

The disordered stretch occupies residues 1 to 100; it reads MAAKVADDVA…VRIDEVFPND (100 aa). The segment covering 37 to 51 has biased composition (acidic residues); that stretch reads EHDDSDDDNEAEDGA. The span at 60 to 73 shows a compositional bias: basic residues; it reads KKKKKRKPRKKKKA. A substrate-binding site is contributed by H205. D225, D236, and H305 together coordinate a divalent metal cation. H313 contributes to the substrate binding site. Positions 338 and 433 each coordinate a divalent metal cation.

The protein belongs to the peptidase M24A family. Methionine aminopeptidase eukaryotic type 2 subfamily. Co(2+) serves as cofactor. It depends on Zn(2+) as a cofactor. Requires Mn(2+) as cofactor. Fe(2+) is required as a cofactor.

The protein resides in the cytoplasm. The catalysed reaction is Release of N-terminal amino acids, preferentially methionine, from peptides and arylamides.. Cotranslationally removes the N-terminal methionine from nascent proteins. The N-terminal methionine is often cleaved when the second residue in the primary sequence is small and uncharged (Met-Ala-, Cys, Gly, Pro, Ser, Thr, or Val). This Pyrenophora teres f. teres (strain 0-1) (Barley net blotch fungus) protein is Methionine aminopeptidase 2-1.